The chain runs to 407 residues: Transmembrane protein 184B (407 aa).

Residues 1–24 (MTVRGAALAPDPASPTTAAASPSI) are disordered. The next 7 membrane-spanning stretches (helical) occupy residues 40–60 (FLMT…ALLI), 84–104 (ILFI…FFTN), 121–141 (LVIY…SSIM), 178–198 (LQFC…QAFG), 214–234 (VTII…LFYF), 249–269 (FFMV…LAIL), and 290–310 (VAAG…ALAL). The disordered stretch occupies residues 369–395 (TLEPGPTWRGGAHGLSRSHSLSGARDN). A phosphoserine mark is found at Ser-388, Ser-402, and Ser-403.

The protein belongs to the TMEM184 family.

The protein localises to the membrane. Its function is as follows. May activate the MAP kinase signaling pathway. In Bos taurus (Bovine), this protein is Transmembrane protein 184B (TMEM184B).